The sequence spans 119 residues: Large ribosomal subunit protein uL24 (119 aa).

This sequence belongs to the universal ribosomal protein uL24 family. As to quaternary structure, part of the 50S ribosomal subunit.

In terms of biological role, one of two assembly initiator proteins, it binds directly to the 5'-end of the 23S rRNA, where it nucleates assembly of the 50S subunit. Located at the polypeptide exit tunnel on the outside of the subunit. In Methanococcus maripaludis (strain C5 / ATCC BAA-1333), this protein is Large ribosomal subunit protein uL24.